A 567-amino-acid chain; its full sequence is 2-succinyl-5-enolpyruvyl-6-hydroxy-3-cyclohexene-1-carboxylate synthase (567 aa).

Belongs to the TPP enzyme family. MenD subfamily. As to quaternary structure, homodimer. It depends on Mg(2+) as a cofactor. Mn(2+) serves as cofactor. Requires thiamine diphosphate as cofactor.

It carries out the reaction isochorismate + 2-oxoglutarate + H(+) = 5-enolpyruvoyl-6-hydroxy-2-succinyl-cyclohex-3-ene-1-carboxylate + CO2. It participates in quinol/quinone metabolism; 1,4-dihydroxy-2-naphthoate biosynthesis; 1,4-dihydroxy-2-naphthoate from chorismate: step 2/7. Its pathway is quinol/quinone metabolism; menaquinone biosynthesis. Catalyzes the thiamine diphosphate-dependent decarboxylation of 2-oxoglutarate and the subsequent addition of the resulting succinic semialdehyde-thiamine pyrophosphate anion to isochorismate to yield 2-succinyl-5-enolpyruvyl-6-hydroxy-3-cyclohexene-1-carboxylate (SEPHCHC). This is 2-succinyl-5-enolpyruvyl-6-hydroxy-3-cyclohexene-1-carboxylate synthase from Yersinia pestis bv. Antiqua (strain Angola).